The primary structure comprises 589 residues: Cytoplasmic polyadenylation element-binding protein 2 (589 aa).

2 disordered regions span residues 1–103 (MPPP…QAAA) and 118–140 (PLLKQSPWSNHQSSGWGTGSMSW). The span at 24 to 33 (FFPSFSPVSP) shows a compositional bias: low complexity. Residues 44-53 (SGGGGGGFGG) are compositionally biased toward gly residues. A compositionally biased stretch (pro residues) spans 60-81 (VPPPPPPAMNIPQQQPPPPAAP). 2 stretches are compositionally biased toward low complexity: residues 82–103 (QQPQSRRSPVSPQLQQQHQAAA) and 130–140 (SSGWGTGSMSW). S89 is subject to Phosphoserine. RRM domains follow at residues 332–423 (RKVF…PWNL) and 440–522 (KTIF…PYVL).

The protein belongs to the RRM CPEB family. In terms of assembly, interacts with TENT2/GLD2.

It is found in the cytoplasm. In terms of biological role, may play a role in translational regulation of stored mRNAs in transcriptionally inactive haploid spermatids. Binds to poly(U) RNA oligomers. Required for cell cycle progression, specifically for the transition from metaphase to anaphase. The protein is Cytoplasmic polyadenylation element-binding protein 2 (CPEB2) of Homo sapiens (Human).